The following is a 719-amino-acid chain: Phosphoribosylformylglycinamidine synthase subunit PurL (719 aa).

The active site involves histidine 47. ATP-binding residues include tyrosine 50 and lysine 89. Position 91 (glutamate 91) interacts with Mg(2+). Substrate contacts are provided by residues 92-95 and arginine 114; that span reads SHNH. The active-site Proton acceptor is the histidine 93. Aspartate 115 lines the Mg(2+) pocket. A substrate-binding site is contributed by glutamine 238. Aspartate 266 serves as a coordination point for Mg(2+). 310–312 serves as a coordination point for substrate; sequence ESQ. Residues aspartate 488 and glycine 525 each coordinate ATP. Mg(2+) is bound at residue asparagine 526. A substrate-binding site is contributed by serine 528.

This sequence belongs to the FGAMS family. As to quaternary structure, monomer. Part of the FGAM synthase complex composed of 1 PurL, 1 PurQ and 2 PurS subunits.

Its subcellular location is the cytoplasm. The catalysed reaction is N(2)-formyl-N(1)-(5-phospho-beta-D-ribosyl)glycinamide + L-glutamine + ATP + H2O = 2-formamido-N(1)-(5-O-phospho-beta-D-ribosyl)acetamidine + L-glutamate + ADP + phosphate + H(+). The protein operates within purine metabolism; IMP biosynthesis via de novo pathway; 5-amino-1-(5-phospho-D-ribosyl)imidazole from N(2)-formyl-N(1)-(5-phospho-D-ribosyl)glycinamide: step 1/2. Functionally, part of the phosphoribosylformylglycinamidine synthase complex involved in the purines biosynthetic pathway. Catalyzes the ATP-dependent conversion of formylglycinamide ribonucleotide (FGAR) and glutamine to yield formylglycinamidine ribonucleotide (FGAM) and glutamate. The FGAM synthase complex is composed of three subunits. PurQ produces an ammonia molecule by converting glutamine to glutamate. PurL transfers the ammonia molecule to FGAR to form FGAM in an ATP-dependent manner. PurS interacts with PurQ and PurL and is thought to assist in the transfer of the ammonia molecule from PurQ to PurL. The chain is Phosphoribosylformylglycinamidine synthase subunit PurL from Cereibacter sphaeroides (strain ATCC 17025 / ATH 2.4.3) (Rhodobacter sphaeroides).